The chain runs to 137 residues: ATP synthase epsilon chain (137 aa).

This sequence belongs to the ATPase epsilon chain family. In terms of assembly, F-type ATPases have 2 components, CF(1) - the catalytic core - and CF(0) - the membrane proton channel. CF(1) has five subunits: alpha(3), beta(3), gamma(1), delta(1), epsilon(1). CF(0) has three main subunits: a, b and c.

It localises to the cellular thylakoid membrane. Functionally, produces ATP from ADP in the presence of a proton gradient across the membrane. This is ATP synthase epsilon chain (atpC) from Nostoc sp. (strain PCC 7120 / SAG 25.82 / UTEX 2576).